Here is a 129-residue protein sequence, read N- to C-terminus: M-zodatoxin-Lt8d (129 aa).

Residues 1–20 form the signal peptide; that stretch reads MKYFVVALALVAAFACIAES. Residues 21–60 constitute a propeptide that is removed on maturation; that stretch reads KPAESEHELAEVEEENELADLEDAVWLEHLADLSDLEEAR. Positions 57–60 match the Processing quadruplet motif motif; that stretch reads EEAR.

Cleavage of the propeptide depends on the processing quadruplet motif (XXXR, with at least one of X being E). Expressed by the venom gland.

It is found in the secreted. In terms of biological role, insecticidal, cytolytic and antimicrobial peptide. Forms voltage-dependent, ion-permeable channels in membranes. At high concentration causes cell membrane lysis. The polypeptide is M-zodatoxin-Lt8d (cit 1-4) (Lachesana tarabaevi (Spider)).